Here is a 241-residue protein sequence, read N- to C-terminus: GPI-anchored hemophore RBT5 (241 aa).

The first 20 residues, M1 to A20, serve as a signal peptide directing secretion. The 112-residue stretch at N26–A137 folds into the CFEM domain. 4 cysteine pairs are disulfide-bonded: C54–C94, C58–C89, C68–C75, and C77–C110. D72 is a binding site for heme. Composition is skewed to low complexity over residues T140 to T154 and K163 to T182. The tract at residues T140–A210 is disordered. Residues S183–E199 are compositionally biased toward basic and acidic residues. The span at S200–A210 shows a compositional bias: low complexity. N221 carries the GPI-anchor amidated asparagine lipid modification. Residues A222–F241 constitute a propeptide, removed in mature form.

This sequence belongs to the RBT5 family. In terms of assembly, interacts with PGA7. The GPI-anchor is attached to the protein in the endoplasmic reticulum and serves to target the protein to the cell surface. There, the glucosamine-inositol phospholipid moiety is cleaved off and the GPI-modified mannoprotein is covalently attached via its lipidless GPI glycan remnant to the 1,6-beta-glucan of the outer cell wall layer. In terms of processing, mannosylated.

It is found in the secreted. It localises to the cell wall. Its subcellular location is the cell membrane. Its function is as follows. GPI-linked hyphal surface heme-binding protein involved in heme-iron utilization. Heme transfer occurs between PGA7, RBT5 and CSA2 supporting a model in which the 3 CFEM proteins cooperate in a heme-acquisition system and form a cross-cell wall heme-transfer cascade. The ability to acquire iron from host tissues is a major virulence factor of pathogenic microorganisms. Required for biofilm formation. The protein is GPI-anchored hemophore RBT5 of Candida albicans (strain SC5314 / ATCC MYA-2876) (Yeast).